Reading from the N-terminus, the 675-residue chain is Heat shock 70 kDa protein 12A (675 aa).

Residues 1–13 (MADKEAGGSDGPR) show a composition bias toward basic and acidic residues. The tract at residues 1–45 (MADKEAGGSDGPRETAPTSAYSSPARSLGDTGITPLSPSHIVNDT) is disordered. Ala2 carries the N-acetylalanine modification. Polar residues-rich tracts occupy residues 16 to 25 (APTSAYSSPA) and 34 to 45 (TPLSPSHIVNDT).

This sequence belongs to the heat shock protein 70 family. Interacts with SORL1 (via cytosolic C-terminus); this interaction affects SORL1 internalization and subcellular localization. Widely expressed with highest levels in brain, kidney and muscle.

The protein resides in the cytoplasm. It localises to the nucleus. In terms of biological role, adapter protein for SORL1, but not SORT1. Delays SORL1 internalization and affects SORL1 subcellular localization. The chain is Heat shock 70 kDa protein 12A (HSPA12A) from Homo sapiens (Human).